A 105-amino-acid chain; its full sequence is Late embryogenesis abundant protein Lea5-D (105 aa).

The segment at 48–67 (KVERRDAMKESSSSETRAYS) is disordered. Over residues 57–67 (ESSSSETRAYS) the composition is skewed to low complexity.

The protein belongs to the LEA type 3 family.

The sequence is that of Late embryogenesis abundant protein Lea5-D (LEA5-D) from Gossypium hirsutum (Upland cotton).